Consider the following 224-residue polypeptide: MMRVLVVEDNALLRHHLKVQLQDSGHQVDAAEDAREADYYLNEHLPDIAIVDLGLPDEDGLSLIRRWRSSDVSLPVLVLTAREGWQDKVEVLSSGADDYVTKPFHIEEVMARMQALMRRNSGLASQVINIPPFQVDLSRRELSVNEEVIKLTAFEYTIMETLIRNNGKVVSKDSLMLQLYPDAELRESHTIDVLMGRLRKKIQAQYPHDVITTVRGQGYLFELR.

Residues 3-117 (RVLVVEDNAL…EVMARMQALM (115 aa)) form the Response regulatory domain. The residue at position 52 (aspartate 52) is a 4-aspartylphosphate. The ompR/PhoB-type DNA-binding region spans 125 to 223 (SQVINIPPFQ…VRGQGYLFEL (99 aa)).

In terms of assembly, monomer in the inactive, unphosphorylated state and dimer in the active, phosphorylated state. In terms of processing, phosphorylated by PhoQ.

Its subcellular location is the cytoplasm. Member of the two-component regulatory system PhoP/PhoQ which regulates the expression of genes involved in virulence, adaptation to acidic and low Mg(2+) environments and resistance to host defense antimicrobial peptides. Essential for intramacrophage survival of S.typhimurium. In low periplasmic Mg(2+), PhoQ phosphorylates PhoP, resulting in the expression of PhoP-activated genes (PAG) and repression of PhoP-repressed genes (PRG). In high periplasmic Mg(2+), PhoQ dephosphorylates phospho-PhoP, resulting in the repression of PAG and may lead to expression of some PRG. Essential for transcription of spiC inside macrophages by controlling the expression of the two-component regulatory system SsrB/SpiR (SsrA) and Pir at transcriptional and post-transcriptional levels respectively. Promotes expression of the two-component regulatory system PmrA/PmrB via activation of pmrD gene. Is required to attenuate bacterial growth within fibroblast cells and to enhance bacterial resistance to bile in intestinal cells. Negatively regulates prgH, which is required for invasion of epithelial cells. PhoP uses multiple mechanisms to promote transcription and activates promoters for PAG at low (uM range) Mg(2+) concentrations. Involved in acid tolerance. The chain is Virulence transcriptional regulatory protein PhoP (phoP) from Salmonella typhimurium (strain SL1344).